We begin with the raw amino-acid sequence, 340 residues long: Guanine nucleotide-binding protein G(I)/G(S)/G(T) subunit beta-1 (340 aa).

An N-acetylserine modification is found at Ser-2. The residue at position 2 (Ser-2) is a Phosphoserine. WD repeat units follow at residues 46 to 94 (RTRR…HAIP), 95 to 140 (LRSS…RELA), 141 to 181 (GHTG…TTFT), 182 to 223 (GHTG…QTFT), 224 to 267 (GHES…YSHD), 268 to 309 (NIIC…GVLA), and 310 to 340 (GHDN…KIWN). Residue His-266 is modified to Phosphohistidine.

It belongs to the WD repeat G protein beta family. G proteins are composed of 3 units, alpha, beta and gamma. The heterodimer formed by GNB1 and GNG2 interacts with ARHGEF5. The heterodimer formed by GNB1 and GNG2 interacts with GRK2. Forms a complex with GNAO1 and GNG3. Interacts with ARHGEF18 and RASD2. Forms complexes with TAS2R14 and G-proteins; these complexes play a role in the perception of bitterness. Component of the TAS2R14-GNAI1 complex, consisting of TAS2R14, GNAI1, GNB1 and GNG2. Component of the TAS2R14-GNAT3 complex, consisting of TAS2R14, GNAT3, GNB1 and GNG2. Component of the TAS2R14-GNAS2 complex, consisting of TAS2R14, GNAS2, GNB1 and GNG2. In terms of processing, phosphorylation at His-266 by NDKB contributes to G protein activation by increasing the high energetic phosphate transfer onto GDP.

Functionally, guanine nucleotide-binding proteins (G proteins) are involved as a modulator or transducer in various transmembrane signaling systems. The beta and gamma chains are required for the GTPase activity, for replacement of GDP by GTP, and for G protein-effector interaction. This chain is Guanine nucleotide-binding protein G(I)/G(S)/G(T) subunit beta-1 (GNB1), found in Cricetulus griseus (Chinese hamster).